A 109-amino-acid chain; its full sequence is Cortistatin (109 aa).

The first 25 residues, 1-25 (MMGGRGTGGKWPSAFGLLLLWGVAA), serve as a signal peptide directing secretion. The propeptide occupies 26–93 (SALPLESGPT…PPPQQPPHLD (68 aa)). A disordered region spans residues 64–97 (ASSSTPVGGGTPGLSKSQERPPPQQPPHLDKKPC). A disulfide bond links Cys97 and Cys108.

The protein belongs to the somatostatin family. As to expression, expressed in a subset of GABAergic cells in the cortex and hippocampus.

The protein localises to the secreted. This Mus musculus (Mouse) protein is Cortistatin (Cort).